A 450-amino-acid chain; its full sequence is Perilipin-2 (450 aa).

At Ala2 the chain carries N-acetylalanine. At Ser215 the chain carries Phosphoserine. Tyr232 is subject to Phosphotyrosine. The segment at 411 to 450 (ESESAQAPGTTRRPGRWSRKHPKPVPVSNAEGSQPDDSSS) is disordered. A compositionally biased stretch (basic residues) spans 423–433 (RPGRWSRKHPK). The span at 440–450 (AEGSQPDDSSS) shows a compositional bias: polar residues.

It belongs to the perilipin family. As to quaternary structure, interacts with IRGC. In terms of processing, acylated; primarily with C14, C16 and C18 fatty acids. Phosphorylation at Tyr-232 by isoform 1 of CHKA (CHKalpha2) promotes dissociation from lipid droplets: dissociation is followed by recruitment of autophagosome machinery to lipid droplets and subsequent lipid droplet lipolysis. Post-translationally, polyubiquitination of Nt-acetylatable A-PLIN2 by MARCHF6 lead to degradation by 26S proteasomes. As to expression, milk lipid globules.

It is found in the membrane. The protein resides in the lipid droplet. Structural component of lipid droplets, which is required for the formation and maintenance of lipid storage droplets. The polypeptide is Perilipin-2 (PLIN2) (Bos taurus (Bovine)).